Reading from the N-terminus, the 1075-residue chain is Ataxin-2-like protein (1075 aa).

Methionine 1 carries the post-translational modification N-acetylmethionine. Residues 1–12 (MLKPQPLQQPSQ) show a composition bias toward low complexity. Positions 1-115 (MLKPQPLQQP…KGPPQSPVFE (115 aa)) are disordered. Residues 98–121 (SARGQSTGKGPPQSPVFEGVYNNS) are interaction with MPL. Residues serine 103 and serine 111 each carry the phosphoserine modification. Phosphotyrosine is present on tyrosine 118. Residues 122–199 (RMLHFLTAVV…VMLVHFRNVD (78 aa)) enclose the Sm domain. Lysine 207 bears the N6-acetyllysine mark. Serine 238 bears the Phosphoserine mark. Tyrosine 264 bears the Phosphotyrosine mark. Serine 306 is subject to Phosphoserine. Tyrosine 309 carries the post-translational modification Phosphotyrosine. Residues 316–328 (ENDDGRTEEEKHS) are compositionally biased toward basic and acidic residues. Disordered regions lie at residues 316–521 (ENDD…LEPQ), 551–697 (QFKL…SIPV), 733–770 (VSNS…MMQA), 820–849 (SNPR…EQPT), 865–940 (ATQL…SSFP), and 1022–1045 (PYIG…ADDR). A compositionally biased stretch (polar residues) spans 330–342 (VQRQGSGRESPSL). Phosphoserine is present on residues serine 335 and serine 339. Lysine 348 participates in a covalent cross-link: Glycyl lysine isopeptide (Lys-Gly) (interchain with G-Cter in SUMO2). Tyrosine 349 is subject to Phosphotyrosine. Position 361 is an asymmetric dimethylarginine (arginine 361). Positions 363-380 (GVRCSSSRGGRPGLSSLP) are enriched in low complexity. Phosphoserine is present on residues serine 391 and serine 409. A compositionally biased stretch (polar residues) spans 421-433 (TLSSPSNRPSGET). At serine 449 the chain carries Phosphoserine. Composition is skewed to low complexity over residues 450–462 (PKSA…SASC) and 471–485 (VPTS…SSVS). Phosphoserine is present on residues serine 493 and serine 496. Residues 505-516 (DVKELSTKEPGR) show a composition bias toward basic and acidic residues. Phosphoserine is present on residues serine 557, serine 558, serine 559, and serine 563. A compositionally biased stretch (basic and acidic residues) spans 571-584 (ILKEEPKGKEKEVD). A Phosphoserine modification is found at serine 594. Position 632 is a phosphothreonine (threonine 632). Serine 634, serine 674, serine 680, and serine 684 each carry phosphoserine. Low complexity-rich tracts occupy residues 678 to 694 (STST…STPS) and 761 to 770 (PASAPPMMQA). A compositionally biased stretch (polar residues) spans 874–898 (QPATTPTGSQPQSQHAAPSPVQHQA). Low complexity-rich tracts occupy residues 931-940 (SAQSPQSSFP) and 1025-1037 (GHPQ…QAPG).

It belongs to the ataxin-2 family. As to quaternary structure, interacts with MPL/TPOR and EPOR and dissociates after ligand stimulation. Interacts with DDX6, G3BP1, and ATXN2. Interacts with PRMT1. Interacts with CIC and ATXN1. Thrombopoietin triggers the phosphorylation on tyrosine residues in a way that is dependent on MPL C-terminal domain. In terms of processing, asymmetrically dimethylated. Probably methylated by PRMT1. In terms of tissue distribution, expressed at high levels in thymus, lymph node, spleen, fetal kidney and adult testis. Constitutively associated with MPL and EPOR in hematopoietic cells.

Its subcellular location is the membrane. The protein resides in the cytoplasm. It is found in the nucleus speckle. It localises to the cytoplasmic granule. Functionally, involved in the regulation of stress granule and P-body formation. The polypeptide is Ataxin-2-like protein (ATXN2L) (Homo sapiens (Human)).